The sequence spans 115 residues: NADH-ubiquinone oxidoreductase chain 3 (115 aa).

A run of 3 helical transmembrane segments spans residues 4-24 (FIVMMINIILSMSLIIIAFWL), 55-75 (FFLVAITFLLFDLEIALLLPL), and 86-106 (ITMLTAFILVTVLALGLAYEW).

The protein belongs to the complex I subunit 3 family. Core subunit of respiratory chain NADH dehydrogenase (Complex I) which is composed of 45 different subunits. Interacts with TMEM186. Interacts with TMEM242.

It localises to the mitochondrion inner membrane. It carries out the reaction a ubiquinone + NADH + 5 H(+)(in) = a ubiquinol + NAD(+) + 4 H(+)(out). Its function is as follows. Core subunit of the mitochondrial membrane respiratory chain NADH dehydrogenase (Complex I) which catalyzes electron transfer from NADH through the respiratory chain, using ubiquinone as an electron acceptor. Essential for the catalytic activity of complex I. The chain is NADH-ubiquinone oxidoreductase chain 3 from Reithrodontomys fulvescens (Fulvous harvest mouse).